A 692-amino-acid chain; its full sequence is MEFLPLWLCLGFHFLIVEWRSGRGTATAASQGGCKVVDRVADCRSLNLASVPSGLPAHSRMLVLDANPLRVLWNHSLQAYPRLEDLSLHSCHLDRISHWAFHEQGHLQNLVLADNRLSENYKESATALHTLLRLRRLDLSGNSLTEDMAALMLQNLSSLEVVSLARNTLMRLDDSVFEGLERLVELDLQRNYIFEIEGGAFDGLTELRRLNLAYNNLPCIVDFSLTQLRFLNVSYNILEWFLAAREEAAFELEILDLSHNQLLFFPLLPQCGKLHTLLLQDNSMGFYRELYNTSSPQEMVAQFLLVDGNVTNITTVSLWEEFSSSDLSALRFLDMSQNQLRHLPDGFLKKTPSLSHLNLNQNCLTKLHIREHEPPGALTELDLSRNQLAELHLAPGLTGSLKNLRVFNLSSNQLLGVPTGLFHSASSITTLDMSHNQISLCPQTVPLDWEEPSSCVDFRNMASLRSLSLDGCGLKALQDCPFQGTSLTHLDLSSNWGILNGSVSPLSAVAPTLQVLSLRNVGLGSGAAEMDFSGFGNLRELDLSGNSLTSFPKFKGSSALQTLDLRRNSLTALPQRVVSEQPLRGLQTIYLSQNPYDCCGVEGWGALQHFKTIADLSMVTCNLSSKIIRVVELPEGIPQDCKWGQVDTGLFYLVLILPSCLTLLVASTVIFLTFKKPLLQVIKSRCHWSSIY.

Positions 1-24 are cleaved as a signal peptide; it reads MEFLPLWLCLGFHFLIVEWRSGRG. Residues 25 to 650 lie on the Extracellular side of the membrane; the sequence is TATAASQGGC…CKWGQVDTGL (626 aa). In terms of domain architecture, LRRNT spans 29–56; that stretch reads ASQGGCKVVDRVADCRSLNLASVPSGLP. 10 LRR repeats span residues 58–79, 82–103, 106–127, 133–155, 158–179, 182–203, 206–227, 228–239, 251–272, and 273–294; these read HSRM…SLQA, RLED…AFHE, HLQN…SATA, RLRR…MLQN, SLEV…VFEG, RLVE…AFDG, ELRR…SLTQ, LRFLNVSYNILE, ELEI…PQCG, and KLHT…YNTS. N-linked (GlcNAc...) asparagine glycosylation occurs at Asn-74. A glycan (N-linked (GlcNAc...) asparagine) is linked at Asn-155. N-linked (GlcNAc...) asparagine glycosylation is present at Asn-232. Asn-292, Asn-309, and Asn-312 each carry an N-linked (GlcNAc...) asparagine glycan. LRR repeat units follow at residues 329-350, 353-374, 377-398, 403-424, 427-448, 463-484, 486-507, 512-533, 537-558, 559-580, and 585-605; these read ALRF…FLKK, SLSH…EHEP, ALTE…PGLT, NLRV…LFHS, SITT…VPLD, SLRS…PFQG, SLTH…SPLS, TLQV…MDFS, NLRE…KGSS, ALQT…VVSE, and GLQT…EGWG. Asn-408 carries N-linked (GlcNAc...) asparagine glycosylation. A glycan (N-linked (GlcNAc...) asparagine) is linked at Asn-500. The 38-residue stretch at 606–643 folds into the LRRCT domain; the sequence is ALQHFKTIADLSMVTCNLSSKIIRVVELPEGIPQDCKW. N-linked (GlcNAc...) asparagine glycosylation occurs at Asn-622. Residues 651-671 traverse the membrane as a helical segment; sequence FYLVLILPSCLTLLVASTVIF. Over 672 to 692 the chain is Cytoplasmic; that stretch reads LTFKKPLLQVIKSRCHWSSIY.

This sequence belongs to the LRRC32/LRRC33 family. Interacts (via LRR repeats) with TLR2, TLR3, TLR4, TLR9 and probably other Toll-like receptors. Interacts with CYBB/NOX2; the interaction is direct. Interacts with TGFB1; associates via disulfide bonds with the Latency-associated peptide chain (LAP) regulatory chain of TGFB1, leading to regulate activation of TGF-beta-1.

It localises to the cell membrane. Its subcellular location is the endoplasmic reticulum membrane. In terms of biological role, key regulator of transforming growth factor beta-1 (TGFB1) specifically required for microglia function in the nervous system. Required for activation of latent TGF-beta-1 in macrophages and microglia: associates specifically via disulfide bonds with the Latency-associated peptide (LAP), which is the regulatory chain of TGFB1, and regulates integrin-dependent activation of TGF-beta-1. TGF-beta-1 activation mediated by LRRC33/NRROS is highly localized: there is little spreading of TGF-beta-1 activated from one microglial cell to neighboring microglia, suggesting the existence of localized and selective activation of TGF-beta-1 by LRRC33/NRROS. Indirectly plays a role in Toll-like receptor (TLR) signaling: ability to inhibit TLR-mediated NF-kappa-B activation and cytokine production is probably a consequence of its role in TGF-beta-1 signaling. This is Transforming growth factor beta activator LRRC33 from Rattus norvegicus (Rat).